The following is a 161-amino-acid chain: RuBisCO chaperone RbcX (161 aa).

Disordered regions lie at residues 1–20 and 130–161; these read MQFM…KPME and LGAE…SHAD. The segment covering 147–161 has biased composition (polar residues); it reads DSATPDDASNASHAD.

Belongs to the RbcX family. Homodimer. Interacts with the exposed C-terminal peptide of endogenous RbcL ('Lys-460-Asp-470') via its central cleft, as well as C-terminal peptides from other cyanobacterial RbcL. Contacts a second RbcL monomer via its peripheral polar surface.

It is found in the carboxysome. Its subcellular location is the cytoplasm. Its function is as follows. An RbcL-specific chaperone. The central cleft of the RbcX homodimer (RbcX2) binds the C-terminus of an RbcL monomer, stabilizing the C-terminus and probably preventing its reassociation with chaperonin GroEL-ES. At the same time the peripheral region of RbcX2 binds a second RbcL monomer, bridging the RbcL homodimers in the correct orientation. The RbcX2(2)-bound RbcL dimers then assemble into the RbcL8 core (RbcL8-(RbcX2)8). RbcS binding triggers the release of RbcX2. The chain is RuBisCO chaperone RbcX from Synechococcus sp. (strain ATCC 27144 / PCC 6301 / SAUG 1402/1) (Anacystis nidulans).